The following is a 508-amino-acid chain: Photosystem II CP47 reaction center protein (508 aa).

Helical transmembrane passes span 21–36 (AVHI…WAGS), 101–115 (IVFS…IWHW), 140–156 (GIHL…FGAF), 203–218 (IAAG…FHLS), 237–252 (VLSS…AFVV), and 457–472 (TFAL…HGAR).

Belongs to the PsbB/PsbC family. PsbB subfamily. In terms of assembly, PSII is composed of 1 copy each of membrane proteins PsbA, PsbB, PsbC, PsbD, PsbE, PsbF, PsbH, PsbI, PsbJ, PsbK, PsbL, PsbM, PsbT, PsbX, PsbY, PsbZ, Psb30/Ycf12, at least 3 peripheral proteins of the oxygen-evolving complex and a large number of cofactors. It forms dimeric complexes. The cofactor is Binds multiple chlorophylls. PSII binds additional chlorophylls, carotenoids and specific lipids..

It localises to the plastid. Its subcellular location is the chloroplast thylakoid membrane. Its function is as follows. One of the components of the core complex of photosystem II (PSII). It binds chlorophyll and helps catalyze the primary light-induced photochemical processes of PSII. PSII is a light-driven water:plastoquinone oxidoreductase, using light energy to abstract electrons from H(2)O, generating O(2) and a proton gradient subsequently used for ATP formation. The polypeptide is Photosystem II CP47 reaction center protein (Hordeum vulgare (Barley)).